The primary structure comprises 108 residues: Small ribosomal subunit protein uS10 (108 aa).

It belongs to the universal ribosomal protein uS10 family. Part of the 30S ribosomal subunit.

Its function is as follows. Involved in the binding of tRNA to the ribosomes. The polypeptide is Small ribosomal subunit protein uS10 (Ehrlichia chaffeensis (strain ATCC CRL-10679 / Arkansas)).